Here is a 394-residue protein sequence, read N- to C-terminus: Flap endonuclease 1-A (394 aa).

The interval 1 to 105 is N-domain; that stretch reads MGIKGLTKLI…RELAKRFARR (105 aa). Asp-34 is a binding site for Mg(2+). Position 71 (Arg-71) interacts with DNA. Mg(2+)-binding residues include Asp-87, Glu-159, Glu-161, Asp-180, and Asp-182. An I-domain region spans residues 123 to 254; the sequence is DVEKYSKKTV…QTALKMIRQH (132 aa). Residue Glu-159 coordinates DNA. Residues Gly-232 and Asp-234 each coordinate DNA. Asp-234 provides a ligand contact to Mg(2+). An interaction with PCNA region spans residues 338–346; it reads SQGRLESFF. The tract at residues 343 to 394 is disordered; the sequence is ESFFGVSSSSSNKRKEAPDSEASAGKQVKTAAAVKPAKAASKKGPAKGGKKK. A compositionally biased stretch (low complexity) spans 368–381; sequence KQVKTAAAVKPAKA. Residues 382 to 394 are compositionally biased toward basic residues; it reads ASKKGPAKGGKKK.

Belongs to the XPG/RAD2 endonuclease family. FEN1 subfamily. Interacts with PCNA. Three molecules of FEN1 bind to one PCNA trimer with each molecule binding to one PCNA monomer. PCNA stimulates the nuclease activity without altering cleavage specificity. Mg(2+) serves as cofactor. In terms of processing, phosphorylated. Phosphorylation upon DNA damage induces relocalization to the nuclear plasma.

It is found in the nucleus. The protein resides in the nucleolus. It localises to the nucleoplasm. Its subcellular location is the mitochondrion. In terms of biological role, structure-specific nuclease with 5'-flap endonuclease and 5'-3' exonuclease activities involved in DNA replication and repair. During DNA replication, cleaves the 5'-overhanging flap structure that is generated by displacement synthesis when DNA polymerase encounters the 5'-end of a downstream Okazaki fragment. It enters the flap from the 5'-end and then tracks to cleave the flap base, leaving a nick for ligation. Also involved in the long patch base excision repair (LP-BER) pathway, by cleaving within the apurinic/apyrimidinic (AP) site-terminated flap. Acts as a genome stabilization factor that prevents flaps from equilibrating into structures that lead to duplications and deletions. Also possesses 5'-3' exonuclease activity on nicked or gapped double-stranded DNA, and exhibits RNase H activity. Also involved in replication and repair of rDNA and in repairing mitochondrial DNA. This is Flap endonuclease 1-A from Physcomitrium patens (Spreading-leaved earth moss).